Reading from the N-terminus, the 249-residue chain is DNA polymerase sliding clamp (249 aa).

It belongs to the PCNA family. Homotrimer. The subunits circularize to form a toroid; DNA passes through its center. Replication factor C (RFC) is required to load the toroid on the DNA.

Functionally, sliding clamp subunit that acts as a moving platform for DNA processing. Responsible for tethering the catalytic subunit of DNA polymerase and other proteins to DNA during high-speed replication. The sequence is that of DNA polymerase sliding clamp from Thermococcus gammatolerans (strain DSM 15229 / JCM 11827 / EJ3).